The chain runs to 818 residues: Glycogen phosphorylase (818 aa).

N6-(pyridoxal phosphate)lysine is present on Lys-667.

The protein belongs to the glycogen phosphorylase family. Requires pyridoxal 5'-phosphate as cofactor.

It carries out the reaction [(1-&gt;4)-alpha-D-glucosyl](n) + phosphate = [(1-&gt;4)-alpha-D-glucosyl](n-1) + alpha-D-glucose 1-phosphate. In terms of biological role, phosphorylase is an important allosteric enzyme in carbohydrate metabolism. Enzymes from different sources differ in their regulatory mechanisms and in their natural substrates. However, all known phosphorylases share catalytic and structural properties. The polypeptide is Glycogen phosphorylase (glgP) (Pasteurella multocida (strain Pm70)).